Consider the following 470-residue polypeptide: Tert-butanol monooxygenase / tert-amyl alcohol desaturase oxygenase subunit (470 aa).

The region spanning 51 to 155 (WQPVCLSQEL…AFERNGLVFA (105 aa)) is the Rieske domain. The [2Fe-2S] cluster site is built by C91, H93, C110, and H113.

The protein belongs to the bacterial ring-hydroxylating dioxygenase alpha subunit family. This two-component enzyme is composed of an oxygenase (MdpJ) and a reductase (MdpK). The cofactor is [2Fe-2S] cluster.

It carries out the reaction tert-butanol + NADPH + O2 + H(+) = 2-methylpropane-1,2-diol + NADP(+) + H2O. It catalyses the reaction 2-methylbutan-2-ol + NADPH + O2 + H(+) = 3-hydroxy-3-methylbut-1-ene + NADP(+) + 2 H2O. In terms of biological role, oxygenase component of a two-component system involved in the degradation of tertiary alcohols such as tert-butyl alcohol (TBA) and tert-amyl alcohol (TAA). In the presence of TBA, catalyzes the hydroxylation of TBA to 2-methylpropane-1,2-diol. In the presence of TAA, functions as a desaturase, enabling the degradation of TAA and resulting in the formation of the hemiterpene 3-hydroxy-3-methylbut-1-ene. The specificity of the catalysis depends strongly on the molecule structure of the substrate, allowing either hydroxylation or desaturation reactions. Also catalyzes the desaturation of the tertiary alcohol 3-methyl-3-pentanol (a C6 homolog of TBA and TAA) to 3-methyl-1-penten-3-ol, with lower efficiency. In addition, can transform some secondary alcohols, including the hydroxylation of 2-propanol to 1,2-propanediol, and the desaturation of 2-butanol, 3-methyl-2-butanol and 3-pentanol. In Aquincola tertiaricarbonis, this protein is Tert-butanol monooxygenase / tert-amyl alcohol desaturase oxygenase subunit.